The sequence spans 475 residues: Ankyrin repeat, SAM and basic leucine zipper domain-containing protein 1 (475 aa).

The tract at residues 1-24 is disordered; sequence MAAGTVRGLAVAGGGESSESEDDG. 3 positions are modified to phosphoserine: Ser-17, Ser-18, and Ser-20. 6 ANK repeats span residues 45–74, 78–107, 110–144, 148–177, 181–210, and 214–243; these read EKNETFKKALTTGDISLVQELLDSGLSVDS, YGWTPLMYAASVSNVELVRVLLDRGANASF, DKQTILITACSARGSEEQILKCVELLLSRNADPNV, RLMTPIMYAARDGHPQVVALLVAHGAEVNA, NGYTALTWAARQGHKNVVLKLLELGANKML, and DGKTPSEIAKRNKHLEIFNFLSLTLNPLEG. The SAM domain maps to 272 to 334; it reads SYTAFGDLEI…KILAALKELE (63 aa).

Interacts with DDX4, PIWIL1, RANBP9 and TDRD1.

The protein resides in the cytoplasm. Its function is as follows. Plays a central role during spermatogenesis by repressing transposable elements and preventing their mobilization, which is essential for the germline integrity. Acts via the piRNA metabolic process, which mediates the repression of transposable elements during meiosis by forming complexes composed of piRNAs and Piwi proteins and governs the methylation and subsequent repression of transposons. Its association with pi-bodies suggests a participation in the primary piRNAs metabolic process. Required prior to the pachytene stage to facilitate the production of multiple types of piRNAs, including those associated with repeats involved in the regulation of retrotransposons. May act by mediating protein-protein interactions during germ cell maturation. The polypeptide is Ankyrin repeat, SAM and basic leucine zipper domain-containing protein 1 (ASZ1) (Neofelis nebulosa (Clouded leopard)).